The sequence spans 287 residues: Pantothenate synthetase (287 aa).

Residue 30–37 (MGALHEGH) coordinates ATP. Histidine 37 acts as the Proton donor in catalysis. Position 61 (glutamine 61) interacts with (R)-pantoate. Glutamine 61 is a beta-alanine binding site. ATP is bound at residue 147–150 (GEKD). Position 153 (glutamine 153) interacts with (R)-pantoate. ATP is bound at residue 184–187 (MSSR).

Belongs to the pantothenate synthetase family. As to quaternary structure, homodimer.

Its subcellular location is the cytoplasm. It catalyses the reaction (R)-pantoate + beta-alanine + ATP = (R)-pantothenate + AMP + diphosphate + H(+). The protein operates within cofactor biosynthesis; (R)-pantothenate biosynthesis; (R)-pantothenate from (R)-pantoate and beta-alanine: step 1/1. Catalyzes the condensation of pantoate with beta-alanine in an ATP-dependent reaction via a pantoyl-adenylate intermediate. The chain is Pantothenate synthetase from Granulibacter bethesdensis (strain ATCC BAA-1260 / CGDNIH1).